A 680-amino-acid polypeptide reads, in one-letter code: DNA ligase (680 aa).

Residues 35–39 (DADFD), 86–87 (SL), and glutamate 111 each bind NAD(+). The N6-AMP-lysine intermediate role is filled by lysine 113. NAD(+) is bound by residues arginine 134, glutamate 174, lysine 290, and lysine 314. The Zn(2+) site is built by cysteine 408, cysteine 411, cysteine 427, and cysteine 433. One can recognise a BRCT domain in the interval 597–680 (VAEQTLEGLT…RLLNTGSADE (84 aa)).

It belongs to the NAD-dependent DNA ligase family. LigA subfamily. It depends on Mg(2+) as a cofactor. Requires Mn(2+) as cofactor.

The catalysed reaction is NAD(+) + (deoxyribonucleotide)n-3'-hydroxyl + 5'-phospho-(deoxyribonucleotide)m = (deoxyribonucleotide)n+m + AMP + beta-nicotinamide D-nucleotide.. Its function is as follows. DNA ligase that catalyzes the formation of phosphodiester linkages between 5'-phosphoryl and 3'-hydroxyl groups in double-stranded DNA using NAD as a coenzyme and as the energy source for the reaction. It is essential for DNA replication and repair of damaged DNA. This is DNA ligase from Corynebacterium glutamicum (strain R).